Here is a 369-residue protein sequence, read N- to C-terminus: Holliday junction branch migration complex subunit RuvB (369 aa).

The tract at residues 1–21 is disordered; sequence MHKNENNRLLGSVSLPDDPDR. A large ATPase domain (RuvB-L) region spans residues 1–184; it reads MHKNENNRLL…FGIPIRLNFY (184 aa). ATP contacts are provided by residues L23, R24, G65, K68, T69, T70, 131–133, R174, Y184, and R221; that span reads EDY. T69 serves as a coordination point for Mg(2+). The small ATPAse domain (RuvB-S) stretch occupies residues 185 to 255; it reads TIEELEYIVK…IADTALSRLE (71 aa). Residues 258–369 are head domain (RuvB-H); sequence HLGLDPLDRN…QKHLWEKDYD (112 aa). The DNA site is built by R294, R313, and R318.

The protein belongs to the RuvB family. In terms of assembly, homohexamer. Forms an RuvA(8)-RuvB(12)-Holliday junction (HJ) complex. HJ DNA is sandwiched between 2 RuvA tetramers; dsDNA enters through RuvA and exits via RuvB. An RuvB hexamer assembles on each DNA strand where it exits the tetramer. Each RuvB hexamer is contacted by two RuvA subunits (via domain III) on 2 adjacent RuvB subunits; this complex drives branch migration. In the full resolvosome a probable DNA-RuvA(4)-RuvB(12)-RuvC(2) complex forms which resolves the HJ.

It is found in the cytoplasm. It carries out the reaction ATP + H2O = ADP + phosphate + H(+). Its function is as follows. The RuvA-RuvB-RuvC complex processes Holliday junction (HJ) DNA during genetic recombination and DNA repair, while the RuvA-RuvB complex plays an important role in the rescue of blocked DNA replication forks via replication fork reversal (RFR). RuvA specifically binds to HJ cruciform DNA, conferring on it an open structure. The RuvB hexamer acts as an ATP-dependent pump, pulling dsDNA into and through the RuvAB complex. RuvB forms 2 homohexamers on either side of HJ DNA bound by 1 or 2 RuvA tetramers; 4 subunits per hexamer contact DNA at a time. Coordinated motions by a converter formed by DNA-disengaged RuvB subunits stimulates ATP hydrolysis and nucleotide exchange. Immobilization of the converter enables RuvB to convert the ATP-contained energy into a lever motion, pulling 2 nucleotides of DNA out of the RuvA tetramer per ATP hydrolyzed, thus driving DNA branch migration. The RuvB motors rotate together with the DNA substrate, which together with the progressing nucleotide cycle form the mechanistic basis for DNA recombination by continuous HJ branch migration. Branch migration allows RuvC to scan DNA until it finds its consensus sequence, where it cleaves and resolves cruciform DNA. The chain is Holliday junction branch migration complex subunit RuvB from Bartonella bacilliformis (strain ATCC 35685 / KC583 / Herrer 020/F12,63).